A 332-amino-acid polypeptide reads, in one-letter code: Fructose-1,6-bisphosphatase class 1 (332 aa).

Mg(2+) is bound by residues Glu89, Asp110, Leu112, and Asp113. Residues 113 to 116, Asn206, Tyr239, 257 to 259, and Lys269 contribute to the substrate site; these read DGSS and YLY. Glu275 contributes to the Mg(2+) binding site.

This sequence belongs to the FBPase class 1 family. As to quaternary structure, homotetramer. Mg(2+) is required as a cofactor.

The protein resides in the cytoplasm. The catalysed reaction is beta-D-fructose 1,6-bisphosphate + H2O = beta-D-fructose 6-phosphate + phosphate. It participates in carbohydrate biosynthesis; gluconeogenesis. This chain is Fructose-1,6-bisphosphatase class 1, found in Escherichia coli (strain ATCC 8739 / DSM 1576 / NBRC 3972 / NCIMB 8545 / WDCM 00012 / Crooks).